The sequence spans 179 residues: Large ribosomal subunit protein uL6 (179 aa).

Belongs to the universal ribosomal protein uL6 family. Part of the 50S ribosomal subunit.

Its function is as follows. This protein binds to the 23S rRNA, and is important in its secondary structure. It is located near the subunit interface in the base of the L7/L12 stalk, and near the tRNA binding site of the peptidyltransferase center. This is Large ribosomal subunit protein uL6 from Gemmatimonas aurantiaca (strain DSM 14586 / JCM 11422 / NBRC 100505 / T-27).